Consider the following 127-residue polypeptide: Small ribosomal subunit protein uS11 (127 aa).

It belongs to the universal ribosomal protein uS11 family. In terms of assembly, part of the 30S ribosomal subunit. Interacts with proteins S7 and S18. Binds to IF-3.

Located on the platform of the 30S subunit, it bridges several disparate RNA helices of the 16S rRNA. Forms part of the Shine-Dalgarno cleft in the 70S ribosome. The polypeptide is Small ribosomal subunit protein uS11 (Chlorobaculum parvum (strain DSM 263 / NCIMB 8327) (Chlorobium vibrioforme subsp. thiosulfatophilum)).